Here is a 178-residue protein sequence, read N- to C-terminus: Bifunctional protein PyrR (178 aa).

Residues 97 to 109 (VVLVDDVLYTGRT) carry the PRPP-binding motif.

This sequence belongs to the purine/pyrimidine phosphoribosyltransferase family. PyrR subfamily.

It carries out the reaction UMP + diphosphate = 5-phospho-alpha-D-ribose 1-diphosphate + uracil. Functionally, regulates the transcription of the pyrimidine nucleotide (pyr) operon in response to exogenous pyrimidines. In terms of biological role, also displays a weak uracil phosphoribosyltransferase activity which is not physiologically significant. This chain is Bifunctional protein PyrR, found in Herpetosiphon aurantiacus (strain ATCC 23779 / DSM 785 / 114-95).